A 512-amino-acid chain; its full sequence is tRNA-guanine(15) transglycosylase (512 aa).

D85 serves as the catalytic Nucleophile. A substrate-binding site is contributed by D120. Zn(2+) is bound by residues C272, C274, and C277.

This sequence belongs to the archaeosine tRNA-ribosyltransferase family. The cofactor is Zn(2+).

It carries out the reaction guanosine(15) in tRNA + 7-cyano-7-deazaguanine = 7-cyano-7-carbaguanosine(15) in tRNA + guanine. Its pathway is tRNA modification; archaeosine-tRNA biosynthesis. Functionally, exchanges the guanine residue with 7-cyano-7-deazaguanine (preQ0) at position 15 in the dihydrouridine loop (D-loop) of archaeal tRNAs. In Aeropyrum pernix (strain ATCC 700893 / DSM 11879 / JCM 9820 / NBRC 100138 / K1), this protein is tRNA-guanine(15) transglycosylase.